We begin with the raw amino-acid sequence, 451 residues long: Uronate isomerase (451 aa).

This sequence belongs to the metallo-dependent hydrolases superfamily. Uronate isomerase family. In terms of assembly, homotrimer.

The catalysed reaction is D-glucuronate = D-fructuronate. The enzyme catalyses aldehydo-D-galacturonate = keto-D-tagaturonate. It participates in carbohydrate metabolism; pentose and glucuronate interconversion. The chain is Uronate isomerase from Thermotoga maritima (strain ATCC 43589 / DSM 3109 / JCM 10099 / NBRC 100826 / MSB8).